Here is a 267-residue protein sequence, read N- to C-terminus: Corrinoid adenosyltransferase EutT (267 aa).

2 residues coordinate a divalent metal cation: C80 and C83.

Belongs to the Cob(I)alamin adenosyltransferase family. EutT subfamily. In terms of assembly, homodimer. The cofactor is a divalent metal cation.

Its subcellular location is the bacterial microcompartment. It carries out the reaction 2 cob(II)alamin + reduced [electron-transfer flavoprotein] + 2 ATP + 2 H2O = 2 adenosylcob(III)alamin + oxidized [electron-transfer flavoprotein] + 2 phosphate + 2 diphosphate + 3 H(+). The catalysed reaction is 2 cob(II)inamide + reduced [electron-transfer flavoprotein] + 2 ATP + 2 H2O = 2 adenosylcob(III)inamide + oxidized [electron-transfer flavoprotein] + 2 phosphate + 2 diphosphate + 3 H(+). The protein operates within amine and polyamine degradation; ethanolamine degradation. In terms of biological role, converts cyanocobalamin (CN-B12) to adenosylcobalamin (AdoCbl), the inducer of the eut operon. Is not active on cobinamide nor other intermediates in the adenosylcobalamin synthetic pathway. Allows full induction of the eut operon. Can use ADP, CTP and dATP in place of ATP, and cobinamide in place of cobalamin, none are as efficiently used as ATP and cobalamin. Expression of the eut operon allows this bacteria to use ethanolamine (EA) as a carbon, nitrogen and energy source. It relies on cobalamin (vitamin B12) both as a cofactor for the ethanolamine ammonia-lyase (EAL) activity and to induce the operon. EA enhances bacterial survival in macrophages in a concentration-dependent manner, suggesting it is an important nutrient during infection. The polypeptide is Corrinoid adenosyltransferase EutT (Salmonella typhimurium (strain LT2 / SGSC1412 / ATCC 700720)).